The primary structure comprises 287 residues: AA9 family lytic polysaccharide monooxygenase D (287 aa).

A signal peptide spans 1-17; sequence MKLSLLAAAAIAPMVSA. H18 serves as a coordination point for Cu(2+). C67 and C189 are disulfide-bonded. H176 contacts O2. Position 186 (Y186) interacts with Cu(2+). N-linked (GlcNAc...) asparagine glycans are attached at residues N220 and N250. The segment at 239-287 is disordered; sequence TGGSGSSTGSYNESNAEDSNEYPYQKESGTCQSNFYRREHARDFSHRRA. Over residues 274-287 the composition is skewed to basic and acidic residues; it reads YRREHARDFSHRRA.

Belongs to the polysaccharide monooxygenase AA9 family. It depends on Cu(2+) as a cofactor.

It is found in the secreted. The catalysed reaction is [(1-&gt;4)-beta-D-glucosyl]n+m + reduced acceptor + O2 = 4-dehydro-beta-D-glucosyl-[(1-&gt;4)-beta-D-glucosyl]n-1 + [(1-&gt;4)-beta-D-glucosyl]m + acceptor + H2O.. Its function is as follows. Lytic polysaccharide monooxygenase (LPMO) that depolymerizes crystalline and amorphous polysaccharides via the oxidation of scissile alpha- or beta-(1-4)-glycosidic bonds, yielding C1 oxidation products. Catalysis by LPMOs requires the reduction of the active-site copper from Cu(II) to Cu(I) by a reducing agent and H(2)O(2) or O(2) as a cosubstrate. Active on celluloseas as well as on the hemicellulose xyloglucan. Shows synergy with other hydrolases in degrading sorghum stover. The polypeptide is AA9 family lytic polysaccharide monooxygenase D (Emericella nidulans (strain FGSC A4 / ATCC 38163 / CBS 112.46 / NRRL 194 / M139) (Aspergillus nidulans)).